The sequence spans 258 residues: Phosphate import ATP-binding protein PstB (258 aa).

The ABC transporter domain occupies 5–247; the sequence is IDISGLSAFY…ERIFSNPSVQ (243 aa). 37 to 44 is a binding site for ATP; the sequence is GPSGCGKS.

It belongs to the ABC transporter superfamily. Phosphate importer (TC 3.A.1.7) family. In terms of assembly, the complex is composed of two ATP-binding proteins (PstB), two transmembrane proteins (PstC and PstA) and a solute-binding protein (PstS).

Its subcellular location is the cell membrane. The catalysed reaction is phosphate(out) + ATP + H2O = ADP + 2 phosphate(in) + H(+). Functionally, part of the ABC transporter complex PstSACB involved in phosphate import. Responsible for energy coupling to the transport system. This chain is Phosphate import ATP-binding protein PstB, found in Streptomyces griseus.